Here is a 204-residue protein sequence, read N- to C-terminus: uncharacterized protein (204 aa).

Residues 109–136 (QFDIDVHKDQIEKLKDLYKALLRIAETT) adopt a coiled-coil conformation.

This is an uncharacterized protein from Bacillus subtilis (strain 168).